Consider the following 37-residue polypeptide: Large ribosomal subunit protein bL36c (37 aa).

The protein belongs to the bacterial ribosomal protein bL36 family.

The protein localises to the plastid. It localises to the chloroplast. The protein is Large ribosomal subunit protein bL36c of Psilotum nudum (Whisk fern).